We begin with the raw amino-acid sequence, 1412 residues long: DNA-directed RNA polymerase subunit beta (1412 aa).

It belongs to the RNA polymerase beta chain family. The RNAP catalytic core consists of 2 alpha, 1 beta, 1 beta' and 1 omega subunit. When a sigma factor is associated with the core the holoenzyme is formed, which can initiate transcription.

It carries out the reaction RNA(n) + a ribonucleoside 5'-triphosphate = RNA(n+1) + diphosphate. Its function is as follows. DNA-dependent RNA polymerase catalyzes the transcription of DNA into RNA using the four ribonucleoside triphosphates as substrates. This is DNA-directed RNA polymerase subunit beta from Bdellovibrio bacteriovorus (strain ATCC 15356 / DSM 50701 / NCIMB 9529 / HD100).